A 359-amino-acid polypeptide reads, in one-letter code: 5-amino-6-(D-ribitylamino)uracil--L-tyrosine 4-hydroxyphenyl transferase (359 aa).

Residues 45-282 form the Radical SAM core domain; the sequence is VTYVVNANIN…TYAISRIFFK (238 aa). Residues Cys-59, Cys-63, and Cys-66 each contribute to the [4Fe-4S] cluster site.

Belongs to the radical SAM superfamily. CofH family. Consists of two subunits, CofG and CofH. Requires [4Fe-4S] cluster as cofactor.

The catalysed reaction is 5-amino-6-(D-ribitylamino)uracil + L-tyrosine + S-adenosyl-L-methionine = 5-amino-5-(4-hydroxybenzyl)-6-(D-ribitylimino)-5,6-dihydrouracil + 2-iminoacetate + 5'-deoxyadenosine + L-methionine + H(+). Its pathway is cofactor biosynthesis; coenzyme F0 biosynthesis. Catalyzes the radical-mediated synthesis of 5-amino-5-(4-hydroxybenzyl)-6-(D-ribitylimino)-5,6-dihydrouracil from 5-amino-6-(D-ribitylamino)uracil and L-tyrosine. This is 5-amino-6-(D-ribitylamino)uracil--L-tyrosine 4-hydroxyphenyl transferase from Methanococcus maripaludis (strain C5 / ATCC BAA-1333).